Reading from the N-terminus, the 491-residue chain is Lysine--tRNA ligase 1 (491 aa).

Mg(2+) is bound by residues E400 and E407.

This sequence belongs to the class-II aminoacyl-tRNA synthetase family. In terms of assembly, homodimer. Mg(2+) serves as cofactor.

It is found in the cytoplasm. The catalysed reaction is tRNA(Lys) + L-lysine + ATP = L-lysyl-tRNA(Lys) + AMP + diphosphate. The chain is Lysine--tRNA ligase 1 from Mycoplasmopsis pulmonis (strain UAB CTIP) (Mycoplasma pulmonis).